A 95-amino-acid polypeptide reads, in one-letter code: Acylphosphatase (95 aa).

Residues 5 to 93 (RAHLYIKGKV…GEFQDFRILP (89 aa)) enclose the Acylphosphatase-like domain. Active-site residues include R20 and N38.

Belongs to the acylphosphatase family.

The catalysed reaction is an acyl phosphate + H2O = a carboxylate + phosphate + H(+). This chain is Acylphosphatase (acyP), found in Pyrobaculum islandicum (strain DSM 4184 / JCM 9189 / GEO3).